The following is a 197-amino-acid chain: Carnitine operon protein CaiE (197 aa).

It belongs to the transferase hexapeptide repeat family.

Its pathway is amine and polyamine metabolism; carnitine metabolism. Its function is as follows. Overproduction of CaiE stimulates the activity of CaiB and CaiD. In Citrobacter koseri (strain ATCC BAA-895 / CDC 4225-83 / SGSC4696), this protein is Carnitine operon protein CaiE.